Reading from the N-terminus, the 230-residue chain is Probable dual specificity protein phosphatase DDB_G0283417 (230 aa).

Residues 78-230 enclose the Tyrosine-protein phosphatase domain; the sequence is NNNYESINLY…LEIFEKELLF (153 aa). Catalysis depends on Cys-174, which acts as the Phosphocysteine intermediate.

The protein belongs to the protein-tyrosine phosphatase family. Non-receptor class dual specificity subfamily.

It carries out the reaction O-phospho-L-tyrosyl-[protein] + H2O = L-tyrosyl-[protein] + phosphate. It catalyses the reaction O-phospho-L-seryl-[protein] + H2O = L-seryl-[protein] + phosphate. The enzyme catalyses O-phospho-L-threonyl-[protein] + H2O = L-threonyl-[protein] + phosphate. Functionally, has a dual specificity toward Ser/Thr and Tyr-containing proteins. This Dictyostelium discoideum (Social amoeba) protein is Probable dual specificity protein phosphatase DDB_G0283417.